The chain runs to 515 residues: Ribose import ATP-binding protein RbsA 1 (515 aa).

2 consecutive ABC transporter domains span residues 8 to 244 (FQME…IGRE) and 256 to 503 (VPAT…LNIH). Position 40 to 47 (40 to 47 (GENGAGKS)) interacts with ATP.

It belongs to the ABC transporter superfamily. Ribose importer (TC 3.A.1.2.1) family. In terms of assembly, the complex is composed of an ATP-binding protein (RbsA), two transmembrane proteins (RbsC) and a solute-binding protein (RbsB).

Its subcellular location is the cell inner membrane. The catalysed reaction is D-ribose(out) + ATP + H2O = D-ribose(in) + ADP + phosphate + H(+). In terms of biological role, part of the ABC transporter complex RbsABC involved in ribose import. Responsible for energy coupling to the transport system. The polypeptide is Ribose import ATP-binding protein RbsA 1 (Mesorhizobium japonicum (strain LMG 29417 / CECT 9101 / MAFF 303099) (Mesorhizobium loti (strain MAFF 303099))).